We begin with the raw amino-acid sequence, 529 residues long: tRNA-2-methylthio-N(6)-dimethylallyladenosine synthase (529 aa).

One can recognise an MTTase N-terminal domain in the interval 18–134 (RTYQVRTYGC…LPTLLERARH (117 aa)). Residues Cys-27, Cys-63, Cys-97, Cys-171, Cys-175, and Cys-178 each contribute to the [4Fe-4S] cluster site. The Radical SAM core domain occupies 157 to 404 (RESAYAGWVS…IELQERISLE (248 aa)). The 80-residue stretch at 407–486 (QAQVGRTLEL…PHHLIADGAL (80 aa)) folds into the TRAM domain.

It belongs to the methylthiotransferase family. MiaB subfamily. As to quaternary structure, monomer. [4Fe-4S] cluster serves as cofactor.

Its subcellular location is the cytoplasm. It catalyses the reaction N(6)-dimethylallyladenosine(37) in tRNA + (sulfur carrier)-SH + AH2 + 2 S-adenosyl-L-methionine = 2-methylsulfanyl-N(6)-dimethylallyladenosine(37) in tRNA + (sulfur carrier)-H + 5'-deoxyadenosine + L-methionine + A + S-adenosyl-L-homocysteine + 2 H(+). Catalyzes the methylthiolation of N6-(dimethylallyl)adenosine (i(6)A), leading to the formation of 2-methylthio-N6-(dimethylallyl)adenosine (ms(2)i(6)A) at position 37 in tRNAs that read codons beginning with uridine. The polypeptide is tRNA-2-methylthio-N(6)-dimethylallyladenosine synthase (Mycobacterium sp. (strain KMS)).